We begin with the raw amino-acid sequence, 1132 residues long: DNA-directed RNA polymerase I subunit RPA2 (1132 aa).

The segment at 1067-1098 (CMDCGSLLSPLLEKPPPNWSATRHRKTICLLC) adopts a C4-type zinc-finger fold.

The protein belongs to the RNA polymerase beta chain family. Component of the RNA polymerase I (Pol I) complex consisting of at least 13 subunits.

The protein resides in the nucleus. It localises to the nucleolus. It is found in the chromosome. It carries out the reaction RNA(n) + a ribonucleoside 5'-triphosphate = RNA(n+1) + diphosphate. Its function is as follows. DNA-dependent RNA polymerase catalyzes the transcription of DNA into RNA using the four ribonucleoside triphosphates as substrates. Second largest core component of RNA polymerase I which synthesizes ribosomal RNA precursors. Proposed to contribute to the polymerase catalytic activity and forms the polymerase active center together with the largest subunit. Pol I is composed of mobile elements and RPA2 is part of the core element with the central large cleft and probably a clamp element that moves to open and close the cleft. This Danio rerio (Zebrafish) protein is DNA-directed RNA polymerase I subunit RPA2 (polr1b).